The following is a 612-amino-acid chain: Protein hinderin (612 aa).

At Ser20 the chain carries Phosphoserine. Positions 90 to 166 form a coiled coil; it reads LKDLCLEDKR…CQELLSLYQK (77 aa). Ser178 is subject to Phosphoserine. The stretch at 362 to 406 forms a coiled coil; sequence IEKQLSEDRRQQLMLQKMELEIEKERLQHLLAQQETKLLLKQQQL. Residues 462–477 show a composition bias toward polar residues; that stretch reads STSFKKCPDSPNSGQN. Disordered regions lie at residues 462 to 484 and 509 to 598; these read STSF…KKTV and ETVT…RSPE. Phosphoserine is present on residues Ser471, Ser527, and Ser558. 2 stretches are compositionally biased toward polar residues: residues 555 to 568 and 575 to 585; these read QSLS…SQPH and TWSTLRPTPQK.

Interacts (via N- and C-terminal domains) with SMC3 (via central hinge region).

Competes with SMC1 for binding to SMC3. May affect the availability of SMC3 to engage in the formation of multimeric protein complexes. In Mus musculus (Mouse), this protein is Protein hinderin (Kiaa1328).